Here is a 95-residue protein sequence, read N- to C-terminus: Aspartyl/glutamyl-tRNA(Asn/Gln) amidotransferase subunit C (95 aa).

This sequence belongs to the GatC family. In terms of assembly, heterotrimer of A, B and C subunits.

It carries out the reaction L-glutamyl-tRNA(Gln) + L-glutamine + ATP + H2O = L-glutaminyl-tRNA(Gln) + L-glutamate + ADP + phosphate + H(+). The catalysed reaction is L-aspartyl-tRNA(Asn) + L-glutamine + ATP + H2O = L-asparaginyl-tRNA(Asn) + L-glutamate + ADP + phosphate + 2 H(+). Functionally, allows the formation of correctly charged Asn-tRNA(Asn) or Gln-tRNA(Gln) through the transamidation of misacylated Asp-tRNA(Asn) or Glu-tRNA(Gln) in organisms which lack either or both of asparaginyl-tRNA or glutaminyl-tRNA synthetases. The reaction takes place in the presence of glutamine and ATP through an activated phospho-Asp-tRNA(Asn) or phospho-Glu-tRNA(Gln). This is Aspartyl/glutamyl-tRNA(Asn/Gln) amidotransferase subunit C from Campylobacter concisus (strain 13826).